We begin with the raw amino-acid sequence, 582 residues long: MAEFLDDQETRLCDNCKKEIPVFNFTIHEIHCQRNIGMCPICKEPFPKSDMETHMAAEHCQVTCKCNKKLEKRLLKKHEETECPLRLAVCQHCDLELSILKLKEHEDYCGARTELCGNCGRNVLVKDLKTHPEVCGREGEEKRNEVAIPPNAYDESWGQDGIWIASQLLRQIEALDPPMRLPQRPLRAFESDVFHDRTTNQRNITAQVSIQNNLFEEQERQERNRGQQPPKEGGEDGANLDFMLALSLQNEGQASSVAEQDFWRAVCEADQSHGGPSSLSDIKGAADETMLPCEFCEELYPEELLIDHQTSCNPSRALPSLNTGSSSPRGVEEHDVIFQNFLQQAASKQLDSLMGLSSSRLVEESIIIPCEFCGVQLEEEVLFHHQDQCDQRPATATNHVTEGIPRLDSQPQENSPELPRRRVRHQGDLSSGYLDDIKQETANGPTSCLPPSRPFNNMTATYNQLSRSTSGPRPGCQPSPPRVLKLNNSDSQDIQGRNQNSQNGAIAPGHISVIRPPQSLYPENIVPSFPHGPAGRYGASGRSEGGRNSRVTPAAANYRSRTAKAKPSKQQGAGDAEEEEEE.

The residue at position 2 (A2) is an N-acetylalanine. The TRAF-type zinc-finger motif lies at 27–103 (IHEIHCQRNI…DLELSILKLK (77 aa)). Position 191 is a phosphoserine (S191). Residues 216–238 (EEQERQERNRGQQPPKEGGEDGA) form a disordered region. S278, S320, S326, S327, S409, S415, S430, and S470 each carry phosphoserine. Disordered regions lie at residues 402–509 (EGIP…IAPG) and 522–582 (PENI…EEEE). Polar residues-rich tracts occupy residues 454–471 (PFNN…STSG) and 486–504 (LNNS…SQNG).

Interacts with MAVS, TICAM1, TRAF1, TRAF2, TRAF3 and TRAF6.

In terms of biological role, negative feedback regulator that controls excessive innate immune responses. Regulates both Toll-like receptor 4 (TLR4) and DDX58/RIG1-like helicases (RLH) pathways. May inhibit the LTR pathway by direct interaction with TRAF6 and attenuation of NF-kappa-B activation. May negatively regulate the RLH pathway downstream from MAVS and upstream of NF-kappa-B and IRF3. The chain is TRAF-type zinc finger domain-containing protein 1 (TRAFD1) from Macaca fascicularis (Crab-eating macaque).